We begin with the raw amino-acid sequence, 465 residues long: Fumarate hydratase class II (465 aa).

Substrate is bound by residues 99-101 (SGT), Arg127, 130-133 (HPND), 140-142 (STN), and Thr188. His189 (proton donor/acceptor) is an active-site residue. Ser319 is an active-site residue. Substrate-binding positions include Ser320 and 325 to 327 (KVN).

This sequence belongs to the class-II fumarase/aspartase family. Fumarase subfamily. In terms of assembly, homotetramer.

It is found in the cytoplasm. The catalysed reaction is (S)-malate = fumarate + H2O. The protein operates within carbohydrate metabolism; tricarboxylic acid cycle; (S)-malate from fumarate: step 1/1. Its function is as follows. Involved in the TCA cycle. Catalyzes the stereospecific interconversion of fumarate to L-malate. This chain is Fumarate hydratase class II, found in Parasynechococcus marenigrum (strain WH8102).